A 583-amino-acid polypeptide reads, in one-letter code: Immunity-related GTPase family Q protein (583 aa).

An intrachain disulfide couples cysteine 152 to cysteine 158. The stretch at 155–179 (SDRCEELERLQVVLRTQAEALQRLL) forms a coiled coil. The LIR 1 signature appears at 186–189 (FEVL). Phosphothreonine is present on threonine 203. The 187-residue stretch at 223 to 409 (ARLDLAVAGT…PGLGTWLQHA (187 aa)) folds into the IRG-type G domain. Positions 322–373 (APLVGVRTDGQGEDPPEVLEEEKAQNASDGNSGDARSEGKKAGIGDSGCTAA) are disordered. Positions 332-341 (QGEDPPEVLE) are enriched in acidic residues. The LIR 2 signature appears at 381 to 384 (WEVL).

It belongs to the TRAFAC class dynamin-like GTPase superfamily. IRG family. In terms of assembly, interacts (via LIR motif 1) with GABARAPL2. Interacts (via LIR motif 2) with MAP1LC3B/LC3B.

It is found in the lysosome. It localises to the cytoplasmic vesicle. Its subcellular location is the autophagosome. Autophagy receptor that specifically promotes clearance of misfolded MHC class I molecules by targeting them to the lysosome for degradation. Acts as a molecular adapter that specifically recognizes and binds (1) misfolded MHC class I molecules following their ubiquitination, as well as (2) autophagy-related proteins, promoting the recruitment of misfolded MHC class I molecules to autophagy machinery for degradation. Degradation of misfolded MHC class I molecules is essential to prevent accumulation of defective MHC class I complexes at the surface of CD8(+) T-cells and prevent a stronger T-cell-mediated response. In contrast to other members of the family, does not show GTPase activity. The polypeptide is Immunity-related GTPase family Q protein (Irgq) (Mus musculus (Mouse)).